A 100-amino-acid chain; its full sequence is Urease subunit gamma (100 aa).

Belongs to the urease gamma subunit family. In terms of assembly, heterotrimer of UreA (gamma), UreB (beta) and UreC (alpha) subunits. Three heterotrimers associate to form the active enzyme.

The protein resides in the cytoplasm. It carries out the reaction urea + 2 H2O + H(+) = hydrogencarbonate + 2 NH4(+). It functions in the pathway nitrogen metabolism; urea degradation; CO(2) and NH(3) from urea (urease route): step 1/1. The chain is Urease subunit gamma from Staphylococcus xylosus.